We begin with the raw amino-acid sequence, 360 residues long: MAQQKFLHQRPIQNPFTNPFSSSPLSTSSISNRPISLLSRNGLLLLLALLVILGVFLPWAGSPLFPSPNKLSPSQSKWRDYSLPQAVKFVAKNGTVIVCAVSYPYLPFLNNWLISVSRQKHQDQVLVIAEDYATLYKVNEKWPGHAVLIPPALDSQTAHKFGSQGFFNFTARRPQHLLEILELGYNVMYNDVDMVWLQDPFQYLEGKHDAYFMDDMTAIKPLDHSHDLPPPGKKGRTYICSCMIFLRPTNGAKLLMKKWIEELETQPWSRAKKANDQPGFNWALNKTANQVDMYLLSQAAFPTGGLYFKNKTWVKETKGKHAIIHNNYIVGFEKKIKRFRDFNLWLVDDHASESPLGKLE.

Residues 1 to 25 (MAQQKFLHQRPIQNPFTNPFSSSPL) form a disordered region. The Cytoplasmic portion of the chain corresponds to 1 to 41 (MAQQKFLHQRPIQNPFTNPFSSSPLSTSSISNRPISLLSRN). A compositionally biased stretch (low complexity) spans 14–25 (NPFTNPFSSSPL). A helical; Signal-anchor for type II membrane protein transmembrane segment spans residues 42-62 (GLLLLLALLVILGVFLPWAGS). The Lumenal segment spans residues 63 to 360 (PLFPSPNKLS…ASESPLGKLE (298 aa)). Residues N93 and N168 are each glycosylated (N-linked (GlcNAc...) asparagine). The short motif at 191–193 (DVD) is the DXD motif element. Residues N285 and N310 are each glycosylated (N-linked (GlcNAc...) asparagine).

The protein belongs to the glycosyltransferase 77 family. It depends on Mn(2+) as a cofactor. Mg(2+) serves as cofactor. In terms of tissue distribution, widely expressed.

The protein localises to the golgi apparatus membrane. Its function is as follows. Catalyzes the transfer of D-xylose from UDP-alpha-D-xylose onto L-fucose. Probably involved in the biosynthesis of rhamnogalacturonan II (RG-II) through xylosylation of the internal fucose moiety of the A-chain of RG-II, a structurally complex pectic polysaccharide of the primary cell wall. RG-II is essential for the cell wall integrity of rapidly growing tissues such as roots and pollen tube growth and elongation. The polypeptide is UDP-D-xylose:L-fucose alpha-1,3-D-xylosyltransferase MGP4 (Arabidopsis thaliana (Mouse-ear cress)).